Consider the following 452-residue polypeptide: Peptidase M20 domain-containing protein SMAC_03666.2 (452 aa).

The first 28 residues, 1 to 28, serve as a signal peptide directing secretion; the sequence is MKATSNLLLLWGTSLLSPSSAFVIDNHH. The N-linked (GlcNAc...) asparagine glycan is linked to Asn140. Asp186 contributes to the Zn(2+) binding site. Glu220 functions as the Proton acceptor in the catalytic mechanism. Residue Glu221 participates in Zn(2+) binding. Asn315 carries N-linked (GlcNAc...) asparagine glycosylation.

This sequence belongs to the peptidase M20A family. It depends on Zn(2+) as a cofactor.

The protein resides in the secreted. The chain is Peptidase M20 domain-containing protein SMAC_03666.2 from Sordaria macrospora (strain ATCC MYA-333 / DSM 997 / K(L3346) / K-hell).